A 290-amino-acid polypeptide reads, in one-letter code: Probable porphobilinogen deaminase (290 aa).

Position 230 is an S-(dipyrrolylmethanemethyl)cysteine (Cys-230).

It belongs to the HMBS family. The cofactor is dipyrromethane.

It carries out the reaction 4 porphobilinogen + H2O = hydroxymethylbilane + 4 NH4(+). The protein operates within porphyrin-containing compound metabolism; protoporphyrin-IX biosynthesis; coproporphyrinogen-III from 5-aminolevulinate: step 2/4. Functionally, tetrapolymerization of the monopyrrole PBG into the hydroxymethylbilane pre-uroporphyrinogen in several discrete steps. This is Probable porphobilinogen deaminase from Metallosphaera sedula (strain ATCC 51363 / DSM 5348 / JCM 9185 / NBRC 15509 / TH2).